A 1049-amino-acid chain; its full sequence is MKDMDCIPGPKPLPVVGNLFDLDLDNALQSIIKMADEFGPLFQITVNRQKHIFATSQALVDELCDETRFHKAVIGGVEKLRMLAHDGLFTAHHGERGWGIAHRILMPAFGPLRIRDMFEDMSDVAHQLCFKWARQGSSTSINISEDFTRLTLDTIALCTMSFRLNSYYNSDTMHPFVQSMLYVLKEADLQSSLPEVANCVRVKAQRSMSKHIEAMRSIAGDIIKGRRDKPEPVNDLLNTLLNGRDPVTGEGMSDELIISNIITFLIAGHETTSGLLSFTFYYLLQHPQVLEQARNEVDEVVGVGPITVQHLAKLPYIDAIMKESLRLMPTAPSFTVTPKKPEVLGGKWMINPGQSVHVLLPVCLRDEAVFGPDAGEFRPNRMLEENFSKLPPNSWKPFGNGERGCIGRAFAWQEAQLVVASVLQTFDLVAEDPNYKLRVKETLTIKPDGFRVRATLRHGRSATALSQHNMSAGATSSPGSSAHPAGNKNAQDAAGGQSISFFYGSNSGTCKALAHRLASTMMTRGFTDQHLAPLDSAVDNLPKDQPTIIVTTTYEGQPTDDAKKFLAWLESGIVPSLHGVSYAVFGCGHQDWTKTFYRIPILIDDLMHKAGATRLTTRGEANAAVSDLFSDLEVWEETNLLPALREKFDASNSGEFESLDLQQLQISISKPTRVGMHRDLIEGKVTAIRTLTSPGVPEKRHVEFQITSDTTLRPGDHVNILPVNPPSTVLRALARFNLASDHIITFESSNALDLPQATPVSAAELFGSYLELSQPATRNNLKSLASTTPSDEDKQELLRFHDSYDSLIRDKRVSVLDLLEHFTSITLPIATFISMLPVLRVRTYSLSMAPSFKPLHCSLTFSVVNEPAWSGNGRYLGVGSNYLASLTPGSILYVSPRPAKEAFHLPADQSSKPIIMICAGSGLAPFRSFIQDRMAWLQQGKPLAKALLFFGCRGPQLDDLYHDELSEFESAGVVEVRRAYSKVPNHYPGKGCRYVQHRLFAETETIQDMWAHNATLYLCGSATLAKGVKATLENMLGTLSEERYITEIF.

Cys-405 contacts heme. Positions 462 to 492 (ATALSQHNMSAGATSSPGSSAHPAGNKNAQD) are disordered. Residues 471–486 (SAGATSSPGSSAHPAG) are compositionally biased toward low complexity. The 142-residue stretch at 499–640 (ISFFYGSNSG…DLEVWEETNL (142 aa)) folds into the Flavodoxin-like domain. FMN contacts are provided by residues 505–509 (SNSGT) and 584–616 (VFGCGHQDWTKTFYRIPILIDDLMHKAGATRLT). The FAD-binding FR-type domain maps to 678–906 (RDLIEGKVTA…RPAKEAFHLP (229 aa)).

In the N-terminal section; belongs to the cytochrome P450 family. The cofactor is FAD. It depends on FMN as a cofactor. Heme is required as a cofactor.

It catalyses the reaction 2 oxidized [cytochrome P450] + NADPH = 2 reduced [cytochrome P450] + NADP(+) + H(+). The enzyme catalyses an organic molecule + reduced [NADPH--hemoprotein reductase] + O2 = an alcohol + oxidized [NADPH--hemoprotein reductase] + H2O + H(+). The catalysed reaction is dodecanoate + reduced [NADPH--hemoprotein reductase] + O2 = 5-hydroxydodecanoate + oxidized [NADPH--hemoprotein reductase] + H2O + H(+). It carries out the reaction tetradecanoate + reduced [NADPH--hemoprotein reductase] + O2 = 7-hydroxytetradecanoate + oxidized [NADPH--hemoprotein reductase] + H2O + H(+). It catalyses the reaction dodecan-1-ol + reduced [NADPH--hemoprotein reductase] + O2 = 1,5-dodecanediol + oxidized [NADPH--hemoprotein reductase] + H2O + H(+). The enzyme catalyses dodecan-1-ol + reduced [NADPH--hemoprotein reductase] + O2 = 1,4-dodecanediol + oxidized [NADPH--hemoprotein reductase] + H2O + H(+). The catalysed reaction is dodecan-1-ol + reduced [NADPH--hemoprotein reductase] + O2 = 1,6-dodecanediol + oxidized [NADPH--hemoprotein reductase] + H2O + H(+). In terms of biological role, self-sufficient cytochrome P450 monooxygenase that catalyzes the regioselective in-chain hydroxylation of alkanes, fatty alcohols, and fatty acids at the omega-7 position. Performs hydroxylation of C10-C16 n-alkanes and C12 and C14 fatty alcohols; and thereby enables the one step biocatalytic synthesis of rare alcohols such as 5-dodecanol and 7-tetradecanol. Converts 1-dodecanol into 1,5-dodecanediol as major product with very little sub-terminally hydroxylated products with the 1,4-dodecanediol and 1,6-dodecanediol more abundant. Converts dodecanoic acid to 5-hydroxydodecanoic acid which can be further converted into delta-dodecalactone by lactonization of the 5-hydroxy acid at low pH. Also gives sub-terminal hydroxylation of dodecanoic acid with 9-hydroxydodecanoic acid being the second most abundant product. The protein is Self-sufficient cytochrome P450 monooxygenase CYP505E4 of Penicillium freii.